The sequence spans 203 residues: CASP-like protein 1B1 (203 aa).

Residues 1–24 (MALVNAEKPEVGSSPSSLGPRNKS) lie on the Cytoplasmic side of the membrane. A helical transmembrane segment spans residues 25-45 (WVLLMLRFVAFLATAAATIVM). Residues 46–76 (AANRETKTFVVATIGSTPIKATVTAKFQHTP) lie on the Extracellular side of the membrane. The helical transmembrane segment at 77-97 (AFVFFVIANGMGSIHNLVMIA) threads the bilayer. Residues 98 to 114 (GDTFVRKFDYKGLRWVT) lie on the Cytoplasmic side of the membrane. Residues 115-135 (VAILDMLTAALISGGVNAAVF) traverse the membrane as a helical segment. Residues 136–165 (MAELGKNGNSHAKWNKICDRFGSFCDHGGA) lie on the Extracellular side of the membrane. Residues 166-186 (AIIASFIGLLLMLVISIISII) traverse the membrane as a helical segment. Residues 187–203 (KLLKPKSPLVDSHVLAP) are Cytoplasmic-facing.

Belongs to the Casparian strip membrane proteins (CASP) family. As to quaternary structure, homodimer and heterodimers.

The protein resides in the cell membrane. This chain is CASP-like protein 1B1, found in Ricinus communis (Castor bean).